The chain runs to 720 residues: Asp/Glu-specific dipeptidyl-peptidase (720 aa).

A signal peptide spans 1–21 (MKKRLLLPLFAALCLSQIAHA). C69 and C86 are joined by a disulfide. Catalysis depends on charge relay system residues H85, D227, and S655.

It belongs to the peptidase S46 family. In terms of assembly, homodimer.

It localises to the cell surface. Enzyme activity is completely blocked by diisopropyl-fluorophosphates, moderately by phenylmethylsulfonyl fluoride (PMSF) and 4-(2-methyl)benzenesulfonyl fluoride, and slightly by pepstatin in vitro. Catalyzes the removal of dipeptides from the N-terminus of oligopeptides. Shows a strict specificity for acidic residues (Asp or Glu) in the P1 position, and has a hydrophobic residue preference at the P2 position. Preferentially cleaves the synthetic substrate Leu-Asp-methylcoumaryl-7-amide (Leu-Asp-MCA) as compared to Leu-Glu-MCA. Is involved in amino acid metabolism and bacterial growth of asaccharolytic P.gingivalis, that utilizes amino acids from extracellular proteinaceous nutrients as energy and carbon sources. The protein is Asp/Glu-specific dipeptidyl-peptidase of Porphyromonas gingivalis (strain ATCC 33277 / DSM 20709 / CIP 103683 / JCM 12257 / NCTC 11834 / 2561).